We begin with the raw amino-acid sequence, 429 residues long: Glucose-1-phosphate adenylyltransferase (429 aa).

Residues Gly162, 177–178, and Ser209 contribute to the alpha-D-glucose 1-phosphate site; that span reads EK.

It belongs to the bacterial/plant glucose-1-phosphate adenylyltransferase family. In terms of assembly, homotetramer.

It carries out the reaction alpha-D-glucose 1-phosphate + ATP + H(+) = ADP-alpha-D-glucose + diphosphate. It functions in the pathway glycan biosynthesis; glycogen biosynthesis. Functionally, involved in the biosynthesis of ADP-glucose, a building block required for the elongation reactions to produce glycogen. Catalyzes the reaction between ATP and alpha-D-glucose 1-phosphate (G1P) to produce pyrophosphate and ADP-Glc. The polypeptide is Glucose-1-phosphate adenylyltransferase (Rippkaea orientalis (strain PCC 8801 / RF-1) (Cyanothece sp. (strain PCC 8801))).